The chain runs to 101 residues: MDPQNALYYQPRVPTAAPTSGGVPWSRVGEVAILSFVALICFYLLYLWVLRDLILVLKARQGRSTEELIFGGQAVDRSNPIPNIPAPPSQGNPGPFVPGTG.

Residues 30–50 (EVAILSFVALICFYLLYLWVL) form a helical membrane-spanning segment. The segment at 75 to 101 (VDRSNPIPNIPAPPSQGNPGPFVPGTG) is disordered.

It belongs to the mastrevirus movement protein family. Interacts with the capsid protein (CP). Part of a MP-CP-viral DNA complex.

The protein resides in the host membrane. In terms of biological role, involved in the viral transport within, and between cells. The protein is Movement protein of Maize streak virus genotype A (isolate Kenya) (MSV).